The sequence spans 669 residues: MARLVAVVKYSDEDYPFEKRQMPLYIDDSLTMVLEFSDNMLNLDKQQIDTVQLEQFIQRHRMLKEQDLASAMTVTSREVFNALSQLLPCVGCRRCVERLFSQVMQTGIQALDPLSVGANGVLTLSHGFMTDATKLYTLFYMCGSKMNNELDAIAKNKKGKKNNRCKFHSLDVRKPKPVGGHWMDVWEVMSPECRDEVALIDSNCLLETLENYLQKHRFCADCKNKVHRAFNILTGELDFSKVKGYCANVYQGLRCCPHEGHIHLCCETDFIAHVLGRAEPEFAGGYERRERHAKTIDVAQEEVLTCLGIHLYERLHRIWLKLRAEVQTRQMLFYLGVDALRKSFEVTVEKVRGISRMDQYFKDILEEEKVQELKQEKKRQKKNRKKNKSSCDLPTPLETKSANPSQKNEPPGFMESDGNPCNISEDSNMCAEVTVKNEDLLRSHKVKKGLTPHSNVSDCGYSSSLEGSEPGSQEGSDVACAEGICKHDEAGDDKEEEEGDSCVECWNNCTKDNIKGKNKKKKKKCKPFKCENENTLKQVPYNTESSDSVHSNPNEETKVYNFCMDSEFPRRPWIYHRNEFFSDMSSTESQTRFYSGRETKSLKELLDESECSSQEEDEITQDDIQAFKETYQTFYRDRQQFRQCLKENFKQFCLHQNPSLLVGNTGAIN.

Disordered regions lie at residues 375 to 421 and 452 to 475; these read QEKK…GNPC and PHSN…SQEG. Residues 376 to 388 show a composition bias toward basic residues; the sequence is EKKRQKKNRKKNK. Over residues 398–408 the composition is skewed to polar residues; it reads ETKSANPSQKN.

It is found in the cytoplasm. Functionally, may be involved in spermatogenesis. The polypeptide is Gametogenetin-binding protein 2 (ggnbp2) (Xenopus tropicalis (Western clawed frog)).